We begin with the raw amino-acid sequence, 303 residues long: tRNA pseudouridine synthase-like 1 (303 aa).

Catalysis depends on Asp66, which acts as the Nucleophile. Ser84 bears the Phosphoserine mark. Residue Tyr130 participates in substrate binding.

It belongs to the tRNA pseudouridine synthase TruA family.

It carries out the reaction a uridine in tRNA = a pseudouridine in tRNA. The protein is tRNA pseudouridine synthase-like 1 (PUSL1) of Homo sapiens (Human).